Reading from the N-terminus, the 276-residue chain is Undecaprenyl-diphosphatase (276 aa).

A run of 8 helical transmembrane segments spans residues 1–21 (MSWL…FLPV), 39–59 (AGAS…LIYF), 84–104 (YRLG…GLLF), 115–135 (LWLV…AEYY), 159–179 (LALM…LFLG), 188–208 (FGFL…LPDA), 222–242 (QLIV…AWFL), and 253–273 (FVGY…TGVL).

This sequence belongs to the UppP family.

It is found in the cell membrane. The catalysed reaction is di-trans,octa-cis-undecaprenyl diphosphate + H2O = di-trans,octa-cis-undecaprenyl phosphate + phosphate + H(+). Its function is as follows. Catalyzes the dephosphorylation of undecaprenyl diphosphate (UPP). Confers resistance to bacitracin. In Mycolicibacterium smegmatis (strain ATCC 700084 / mc(2)155) (Mycobacterium smegmatis), this protein is Undecaprenyl-diphosphatase.